Consider the following 101-residue polypeptide: Protein translation factor SUI1 homolog (101 aa).

Belongs to the SUI1 family.

This Methanothermobacter thermautotrophicus (strain ATCC 29096 / DSM 1053 / JCM 10044 / NBRC 100330 / Delta H) (Methanobacterium thermoautotrophicum) protein is Protein translation factor SUI1 homolog.